The primary structure comprises 311 residues: Pantothenate kinase (311 aa).

An ATP-binding site is contributed by 93–100 (GSVAVGKS).

This sequence belongs to the prokaryotic pantothenate kinase family.

Its subcellular location is the cytoplasm. The enzyme catalyses (R)-pantothenate + ATP = (R)-4'-phosphopantothenate + ADP + H(+). It functions in the pathway cofactor biosynthesis; coenzyme A biosynthesis; CoA from (R)-pantothenate: step 1/5. The polypeptide is Pantothenate kinase (coaA) (Haemophilus influenzae (strain ATCC 51907 / DSM 11121 / KW20 / Rd)).